The sequence spans 273 residues: GATA-type zinc finger protein 1 (273 aa).

Disordered stretches follow at residues 99–143 (RDSK…ERVD) and 172–201 (SSRS…AGSE). The GATA-type zinc-finger motif lies at 208–232 (CASCRTQRTPLWRDAEDGTPLCNAC).

It localises to the nucleus. Its function is as follows. Transcriptional regulator that plays a key role in germ cell development. Determines the oogenic fate by activating key genes for the oogenic program and meiotic prophase entry. Acts downstream of bone morphogenetic protein (BMP) by regulating expression of genes required for the oogenic programs, which are repressed by Polycomb activities in sexually uncommitted germ cells. Regulates expression of STRA8, a central downstream effector for the meiotic program. Acts independently of retinoic acid (RA). In males, not required for germ-cell sex determination, but required to allow the spermatogonia to efficiently accomplish the meiotic prophase. In Homo sapiens (Human), this protein is GATA-type zinc finger protein 1.